A 467-amino-acid chain; its full sequence is Venom prothrombin activator omicarin-C catalytic subunit (467 aa).

The first 20 residues, 1–20, serve as a signal peptide directing secretion; the sequence is MAPQLLLCLILTFLWSLPEA. A propeptide spanning residues 21 to 40 is cleaved from the precursor; sequence ESNVFLKSKVANRFLQRTKR. The Gla domain maps to 41 to 86; the sequence is ANSLFEEFRSGNIERECIEERCSKEEAREVFEDDEKTETFWNVYVD. A 4-carboxyglutamate mark is found at Glu46, Glu47, Glu54, Glu56, Glu59, Glu60, Glu65, Glu66, Glu69, Glu72, and Glu75. Cys57 and Cys62 are joined by a disulfide. An EGF-like 1; calcium-binding domain is found at 86 to 122; sequence DGDQCSSNPCHYRGTCKDGIGSYTCTCLFGYEGKNCE. 11 cysteine pairs are disulfide-bonded: Cys90–Cys101, Cys95–Cys110, Cys112–Cys121, Cys129–Cys140, Cys136–Cys149, Cys151–Cys164, Cys172–Cys329, Cys216–Cys221, Cys236–Cys252, Cys377–Cys391, and Cys402–Cys430. Ser92 carries O-linked (Hex...) serine glycosylation. An EGF-like 2 domain is found at 129–164; it reads CRVDNGNCWHFCKPVQNDIQCSCAEGYLLGEDGHSC. Positions 182–209 are cleaved as a propeptide — activation peptide; the sequence is REASLPDFVQSQNATLLKKSDNPSPDIR. The Peptidase S1 domain occupies 210 to 454; that stretch reads IVNGMDCKLG…FILWIKRIMR (245 aa). His251 functions as the Charge relay system in the catalytic mechanism. Asn254 carries N-linked (GlcNAc...) asparagine glycosylation. Residue Asp309 is the Charge relay system of the active site. The active-site Charge relay system is the Ser406.

This sequence belongs to the peptidase S1 family. Snake venom subfamily. Heterodimer of a light and a heavy chains; disulfide-linked. Is associated with omicarin-C non-catalytic subunit (AC Q58L90) in a non-covalent manner. Gamma-carboxyglutamate residues are formed by vitamin K dependent carboxylation. These residues are essential for the binding of calcium. In terms of tissue distribution, expressed by the venom gland.

Its subcellular location is the secreted. The enzyme catalyses Selective cleavage of Arg-|-Thr and then Arg-|-Ile bonds in prothrombin to form thrombin.. Its activity is regulated as follows. Activated by calcium and negatively charged phospholipids. Snake prothrombin activator that attacks the hemostatic system of prey. This catalytic subunit is functionally similar to blood coagulation factor Xa. It requires a non-catalytic subunit present in the venom, which is similar to coagulation factor Va, to be fully active. The protein is Venom prothrombin activator omicarin-C catalytic subunit of Oxyuranus microlepidotus (Inland taipan).